The primary structure comprises 263 residues: Endonuclease 8 (263 aa).

The active-site Schiff-base intermediate with DNA is the Pro2. Glu3 serves as the catalytic Proton donor. Catalysis depends on Lys53, which acts as the Proton donor; for beta-elimination activity. Positions 70, 125, and 169 each coordinate DNA. The FPG-type zinc-finger motif lies at 229-263; the sequence is KVFHRDGEACERCGGIIEKTTLSSRPFYWCPHCQK. The Proton donor; for delta-elimination activity role is filled by Arg253.

The protein belongs to the FPG family. Zn(2+) serves as cofactor.

The catalysed reaction is 2'-deoxyribonucleotide-(2'-deoxyribose 5'-phosphate)-2'-deoxyribonucleotide-DNA = a 3'-end 2'-deoxyribonucleotide-(2,3-dehydro-2,3-deoxyribose 5'-phosphate)-DNA + a 5'-end 5'-phospho-2'-deoxyribonucleoside-DNA + H(+). Functionally, involved in base excision repair of DNA damaged by oxidation or by mutagenic agents. Acts as a DNA glycosylase that recognizes and removes damaged bases. Has a preference for oxidized pyrimidines, such as thymine glycol, 5,6-dihydrouracil and 5,6-dihydrothymine. Has AP (apurinic/apyrimidinic) lyase activity and introduces nicks in the DNA strand. Cleaves the DNA backbone by beta-delta elimination to generate a single-strand break at the site of the removed base with both 3'- and 5'-phosphates. The sequence is that of Endonuclease 8 from Salmonella dublin (strain CT_02021853).